The following is a 309-amino-acid chain: MILTVTMNPSIDISYPLDELKIDTVNRVVDVTKTAGGKGLNVTRVLSEFGDSVLATGLVGGKLGEFLVEHIDNQVKKDFFSIQGETRNCIAILHGDNQTEVLEKGPEVLEQEGQDFLEHFKKLLESVEVVAISGSLPAGLPVDYYASLVELANQAGKPVVLDCSGAALQAVLESPHKPTVIKPNNEELSQLLGREVSEDLDELKEVLQEPLFAGIEWIIVSLGANGTFAKHGDTFYKVDIPRIQVVNPVGSGDSTVAGISSGLLHKESDAELLIKANVLGMLNAQEKMTGHVNMANYQALYDQLIVKEV.

It belongs to the carbohydrate kinase PfkB family. LacC subfamily.

It catalyses the reaction D-tagatofuranose 6-phosphate + ATP = D-tagatofuranose 1,6-bisphosphate + ADP + H(+). It participates in carbohydrate metabolism; D-tagatose 6-phosphate degradation; D-glyceraldehyde 3-phosphate and glycerone phosphate from D-tagatose 6-phosphate: step 1/2. In Streptococcus pneumoniae (strain Hungary19A-6), this protein is Tagatose-6-phosphate kinase.